Consider the following 104-residue polypeptide: Transcription factor ILI1 (104 aa).

Basic residues predominate over residues 1 to 11; it reads MSSSRRSRSRR. Residues 1 to 27 form a disordered region; the sequence is MSSSRRSRSRRAGSSVPSSSSSSRTSI. Over residues 12–27 the composition is skewed to low complexity; the sequence is AGSSVPSSSSSSRTSI. Residues 16–71 enclose the bHLH domain; the sequence is VPSSSSSSRTSISEDQIAELLSKLQALLPESQARNGAHRGSAARVLQETCSYIRSL.

This sequence belongs to the bHLH protein family. Interacts with IBH1.

Its function is as follows. Atypical and probable non DNA-binding bHLH transcription factor that acts as a positive regulator of cell elongation and plant development. Binds the transcription repressor IBH1 and forms a heterodimer of antagonistic bHLH transcription factors that function downstream of BZR1 to mediate brassinosteroid regulation of cell elongation and lamina inclination. In Oryza sativa subsp. indica (Rice), this protein is Transcription factor ILI1 (ILI1).